A 502-amino-acid polypeptide reads, in one-letter code: L-ornithine N(5)-monooxygenase (502 aa).

The segment covering 1-10 (MEPVERKLEI) has biased composition (basic and acidic residues). The segment at 1–34 (MEPVERKLEIGSRSYSKMPLTQQRSSGEPPRLKA) is disordered. A compositionally biased stretch (polar residues) spans 13-26 (RSYSKMPLTQQRSS). FAD-binding positions include 83 to 91 (ERQKQFAWH) and Q102. K107 lines the substrate pocket. V168 serves as a coordination point for FAD. NADP(+) is bound by residues 254–257 (SGQS) and R279. Residues 293–296 (NEVF) and N323 each bind substrate. 323-325 (NYS) contacts NADP(+). 466-468 (SLL) lines the FAD pocket. Position 469 (S469) interacts with substrate.

The protein belongs to the lysine N(6)-hydroxylase/L-ornithine N(5)-oxygenase family. Homotetramer. Requires FAD as cofactor.

The catalysed reaction is L-ornithine + NADPH + O2 = N(5)-hydroxy-L-ornithine + NADP(+) + H2O. It catalyses the reaction L-ornithine + NADH + O2 = N(5)-hydroxy-L-ornithine + NAD(+) + H2O. Its pathway is siderophore biosynthesis. In terms of biological role, catalyzes the conversion of L-ornithine to N(5)-hydroxyornithine, the first step in the biosynthesis of all hydroxamate-containing siderophores, such as deferriferrichrysin. The sequence is that of L-ornithine N(5)-monooxygenase from Aspergillus oryzae (strain ATCC 42149 / RIB 40) (Yellow koji mold).